Here is a 253-residue protein sequence, read N- to C-terminus: Sulfate transporter CysZ (253 aa).

A run of 4 helical transmembrane segments spans residues 31–51 (FVILPLLVNILLMGGAFWWLF), 75–95 (LLWPLAVISVLLVFGYFFSTI), 151–171 (IVLLILYLIPGIGQTVAPVLW), and 222–242 (IPLLNLFIMPVAVCGATAMWV).

Belongs to the CysZ family.

It localises to the cell inner membrane. High affinity, high specificity proton-dependent sulfate transporter, which mediates sulfate uptake. Provides the sulfur source for the cysteine synthesis pathway. This is Sulfate transporter CysZ from Escherichia coli (strain 55989 / EAEC).